Here is a 257-residue protein sequence, read N- to C-terminus: Small ribosomal subunit protein uS3 (257 aa).

The region spanning 39–112 (IRKFLNKKYN…EIVFNVVEVR (74 aa)) is the KH type-2 domain. Residues 217–257 (HEELRKERQSSASSNHGGGKRRPSRKGPRRSQEDAATEGGN) form a disordered region. The span at 234 to 245 (GGKRRPSRKGPR) shows a compositional bias: basic residues.

The protein belongs to the universal ribosomal protein uS3 family. In terms of assembly, part of the 30S ribosomal subunit. Forms a tight complex with proteins S10 and S14.

Functionally, binds the lower part of the 30S subunit head. Binds mRNA in the 70S ribosome, positioning it for translation. The chain is Small ribosomal subunit protein uS3 from Haploplasma axanthum (Acholeplasma axanthum).